The sequence spans 878 residues: Glycogen [starch] synthase (878 aa).

Lysine 61 serves as a coordination point for UDP-alpha-D-glucose. 2 disordered regions span residues 637–721 (PPKP…NVIP) and 746–878 (NEFK…KSLK). Low complexity-rich tracts occupy residues 641-656 (ISRS…LKLS) and 666-676 (QQQQQQQQPQP). A compositionally biased stretch (polar residues) spans 677–692 (IGTTINLIPPSSNVSV). Low complexity-rich tracts occupy residues 693–715 (TPTT…ITTP), 746–781 (NEFK…AAAT), 795–830 (PNTS…NGKP), and 838–878 (TKSN…KSLK).

Belongs to the glycosyltransferase 3 family.

The catalysed reaction is [(1-&gt;4)-alpha-D-glucosyl](n) + UDP-alpha-D-glucose = [(1-&gt;4)-alpha-D-glucosyl](n+1) + UDP + H(+). The protein operates within glycan biosynthesis; glycogen biosynthesis. In terms of biological role, catalyzes the formation of apha-1,4 glycosidic bonds adding glucose residue from UDPG to the growing chain of glycogen. The polypeptide is Glycogen [starch] synthase (glcS) (Dictyostelium discoideum (Social amoeba)).